The chain runs to 498 residues: MAVGSMNVEEGTKAFPAKLTGQVFLCCVIAAVGGLMFGYDIGISGGVTSMDTFLLDFFPHVYEKKHRVHENNYCKFDDQLLQLFTSSLYLAGIFASFISSYVSRAFGRKPTIMLASIFFLVGAILNLSAQELGMLIGGRILLGFGIGFGNQTVPLFISEIAPARYRGGLNVMFQFLITIGILAASYVNYLTSTLKNGWRYSLGGAAVPALILLIGSFFIHETPASLIERGKDEKGKQVLRKIRGIEDIELEFNEIKYATEVATKVKSPFKELFTKSENRPPLVCGTLLQFFQQFTGINVVMFYAPVLFQTMGSGDNASLISTVVTNGVNAIATVISLLVVDFAGRRCLLMEGALQMTATQMTIGGILLAHLKLVGPITGHAVPLIVLILICVYVSGFAWSWGPLGWLVPSEIYPLEVRNAGYFCAVAMNMVCTFIIGQFFLSALCRFRSLLFFFFGIMNIIMGLFVVFFLPETKGVPIEEMAEKRWKTHPRWKKYFKD.

Residues 1 to 22 (MAVGSMNVEEGTKAFPAKLTGQ) lie on the Cytoplasmic side of the membrane. A run of 12 helical transmembrane segments spans residues 23 to 43 (VFLC…DIGI), 80 to 100 (LLQL…FISS), 117 to 137 (IFFL…MLIG), 140 to 160 (ILLG…ISEI), 167 to 187 (GGLN…ASYV), 200 to 220 (YSLG…FFIH), 288 to 308 (LQFF…PVLF), 320 to 340 (ISTV…LLVV), 348 to 368 (LLME…GILL), 381 to 401 (AVPL…AWSW), 421 to 441 (GYFC…QFFL), and 450 to 470 (LLFF…VFFL). The Cytoplasmic segment spans residues 471–498 (PETKGVPIEEMAEKRWKTHPRWKKYFKD).

It belongs to the major facilitator superfamily. Sugar transporter (TC 2.A.1.1) family. Pollen specific (at protein level).

It localises to the membrane. Mediates an active uptake of hexoses, probably by sugar/hydrogen symport. Can transport glucose, 3-O-methylglucose, xylose, mannose, fructose and galactose. This Arabidopsis thaliana (Mouse-ear cress) protein is Sugar transport protein 2 (STP2).